A 323-amino-acid chain; its full sequence is Extracellular endo-alpha-(1-&gt;5)-L-arabinanase 1 (323 aa).

Positions 1-32 (MKKKKTWKRFLHFSSAALAAGLIFTSAAPAEA) are cleaved as a signal peptide. Asp44 serves as the catalytic Proton acceptor. Position 44 (Asp44) interacts with substrate. Ca(2+) is bound at residue Asp107. Substrate contacts are provided by residues Gly125 and 160–163 (NAID). Glu165 serves as a coordination point for Ca(2+). 180-182 (SFW) is a binding site for substrate. Residue Glu215 is the Proton donor of the active site. Asp287 is a Ca(2+) binding site.

It belongs to the glycosyl hydrolase 43 family. Requires Ca(2+) as cofactor.

It is found in the secreted. The enzyme catalyses Endohydrolysis of (1-&gt;5)-alpha-arabinofuranosidic linkages in (1-&gt;5)-arabinans.. The protein operates within glycan metabolism; L-arabinan degradation. Functionally, involved in the degradation of arabinan and is a key enzyme in the complete degradation of the plant cell wall. Catalyzes the internal cleavage of alpha-(1-&gt;5)-L-arabinofuranosyl residues of linear 1,5-alpha-L-arabinan and of branched sugar beet arabinan. It displays no activity against heavily substituted arabinans or a range of other polysaccharides (larch wood arabinogalactan, wheat arabinoxylan and p-nitrophenyl-alpha-L-arabinofuranoside). The enzyme activity is progressively reduced as alpha-(1-&gt;5)-chains become shorter or more highly substituted. The chain is Extracellular endo-alpha-(1-&gt;5)-L-arabinanase 1 (abnA) from Bacillus subtilis (strain 168).